A 174-amino-acid chain; its full sequence is UPF0316 protein lwe1794 (174 aa).

The next 3 membrane-spanning stretches (helical) occupy residues 4–24 (GLFIVVTIFVVNILYVTIYTV), 36–56 (LAALSSVFEMIIYVVALSLVL), and 62–82 (IANVLAYAIGFGVGVIVGMKI).

This sequence belongs to the UPF0316 family.

It is found in the cell membrane. In Listeria welshimeri serovar 6b (strain ATCC 35897 / DSM 20650 / CCUG 15529 / CIP 8149 / NCTC 11857 / SLCC 5334 / V8), this protein is UPF0316 protein lwe1794.